Reading from the N-terminus, the 226-residue chain is Uridylate kinase (226 aa).

6-10 (KISGK) is an ATP binding site. Residue glycine 43 participates in UMP binding. The ATP site is built by glycine 44 and arginine 48. Residues aspartate 65 and 113-119 (FQPGQST) each bind UMP. ATP is bound by residues threonine 139, asparagine 140, tyrosine 145, and aspartate 148.

The protein belongs to the UMP kinase family. Homohexamer.

It is found in the cytoplasm. The enzyme catalyses UMP + ATP = UDP + ADP. It functions in the pathway pyrimidine metabolism; CTP biosynthesis via de novo pathway; UDP from UMP (UMPK route): step 1/1. Inhibited by UTP. Functionally, catalyzes the reversible phosphorylation of UMP to UDP. This Sulfurisphaera tokodaii (strain DSM 16993 / JCM 10545 / NBRC 100140 / 7) (Sulfolobus tokodaii) protein is Uridylate kinase.